A 456-amino-acid chain; its full sequence is MVPHGSCPSGAREVTFEGWRRERGEASMSDVHRTIRVNRSGSKFRRALSFFGPGYLVAVGYMDPGNWATSLAGGSRFGYALLSVVLLSNLMAVLLQALCTRLAVATGRDLAQACRDAYPRFLAWPLWLLAELAICATDLAEVIGTAIGLNLLFGIPLEIGVILTAVDVLLVLYLQNKGFRRVEALIITLLGVIALCFLTQIIMAQPQWGEVIKGFAPTTEIVSNPDMLYIALGIIGATVMPHNLYLHSGIVQTRDYGHTTAEKREAIRYATLDSTIALTFALVINASILILAAASFHATGHTGVEDLDKAHALLNPLLGSAIAPALFAIALLCCGLNSTITATMAGQIVMEGFIDIRLKPWIRRAITRFVAIVPAAIVTILYGSQGTTELLILSQVVLSLQLPFAVIPLVIFTAQKKKMGSLAAAPWVTFLAAITAAIIVVLNLKLIYDFFTGAPI.

Transmembrane regions (helical) follow at residues 47–67, 77–97, 123–143, 151–171, 184–204, 227–247, 276–296, 316–336, 369–389, 392–412, and 422–442; these read ALSF…PGNW, FGYA…LLQA, AWPL…AEVI, LLFG…VLLV, ALII…IIMA, MLYI…LYLH, IALT…AASF, PLLG…CCGL, FVAI…GTTE, ILSQ…LVIF, and LAAA…IVVL.

It belongs to the NRAMP family.

The protein localises to the cell inner membrane. In terms of biological role, h(+)-stimulated, divalent metal cation uptake system. The sequence is that of Divalent metal cation transporter MntH from Brucella suis biovar 1 (strain 1330).